Here is a 261-residue protein sequence, read N- to C-terminus: Carnitinyl-CoA dehydratase (261 aa).

Residue E111 is the Nucleophile of the active site. The active-site Proton acceptor is the E131.

It belongs to the enoyl-CoA hydratase/isomerase family.

The catalysed reaction is (R)-carnitinyl-CoA = crotonobetainyl-CoA + H2O. It functions in the pathway amine and polyamine metabolism; carnitine metabolism. Its function is as follows. Catalyzes the reversible dehydration of L-carnitinyl-CoA to crotonobetainyl-CoA. This is Carnitinyl-CoA dehydratase from Escherichia coli (strain ATCC 8739 / DSM 1576 / NBRC 3972 / NCIMB 8545 / WDCM 00012 / Crooks).